The sequence spans 486 residues: Aspartyl/glutamyl-tRNA(Asn/Gln) amidotransferase subunit B (486 aa).

It belongs to the GatB/GatE family. GatB subfamily. In terms of assembly, heterotrimer of A, B and C subunits.

It carries out the reaction L-glutamyl-tRNA(Gln) + L-glutamine + ATP + H2O = L-glutaminyl-tRNA(Gln) + L-glutamate + ADP + phosphate + H(+). The enzyme catalyses L-aspartyl-tRNA(Asn) + L-glutamine + ATP + H2O = L-asparaginyl-tRNA(Asn) + L-glutamate + ADP + phosphate + 2 H(+). Functionally, allows the formation of correctly charged Asn-tRNA(Asn) or Gln-tRNA(Gln) through the transamidation of misacylated Asp-tRNA(Asn) or Glu-tRNA(Gln) in organisms which lack either or both of asparaginyl-tRNA or glutaminyl-tRNA synthetases. The reaction takes place in the presence of glutamine and ATP through an activated phospho-Asp-tRNA(Asn) or phospho-Glu-tRNA(Gln). This Orientia tsutsugamushi (strain Ikeda) (Rickettsia tsutsugamushi) protein is Aspartyl/glutamyl-tRNA(Asn/Gln) amidotransferase subunit B.